The chain runs to 730 residues: Dual function macrocyclase-peptidase POPB (730 aa).

Residues 1–34 are disordered; that stretch reads MSSVTWAPGNYPSTRRSDHVDTYQSASKGEVPVP. Residues Ser-577, Asp-661, and His-698 each act as charge relay system in the active site.

The protein belongs to the peptidase S9A family. Monomer.

It catalyses the reaction Hydrolysis of Pro-|-Xaa &gt;&gt; Ala-|-Xaa in oligopeptides.. Dual function macrocyclase-peptidase involved in the biosynthesis of the highly toxic amanitin toxin family of macrocycles. Cleaves peptide bonds on the C-terminal side of prolyl residues. The enzyme first removes 10 residues from the N-terminus of a 35-residue substrate. Conformational trapping of the 25 amino-acid peptide forces the enzyme to release this intermediate rather than proceed to macrocyclization. The enzyme rebinds the 25 amino-acid peptide in a different conformation and catalyzes macrocyclization of the N-terminal eight residues. The chain is Dual function macrocyclase-peptidase POPB from Galerina marginata (strain CBS 339.88).